We begin with the raw amino-acid sequence, 237 residues long: Uridylate kinase (237 aa).

12–15 is an ATP binding site; the sequence is KLSG. The segment at 20-25 is involved in allosteric activation by GTP; it reads GDEGFG. Glycine 54 serves as a coordination point for UMP. ATP-binding residues include glycine 55 and arginine 59. UMP-binding positions include aspartate 74 and 135–142; that span reads TGSPFFTT. The ATP site is built by threonine 162, tyrosine 168, and aspartate 171.

Belongs to the UMP kinase family. In terms of assembly, homohexamer.

Its subcellular location is the cytoplasm. It catalyses the reaction UMP + ATP = UDP + ADP. It participates in pyrimidine metabolism; CTP biosynthesis via de novo pathway; UDP from UMP (UMPK route): step 1/1. Its activity is regulated as follows. Allosterically activated by GTP. Inhibited by UTP. Catalyzes the reversible phosphorylation of UMP to UDP. The protein is Uridylate kinase of Mannheimia succiniciproducens (strain KCTC 0769BP / MBEL55E).